We begin with the raw amino-acid sequence, 210 residues long: Large ribosomal subunit protein uL3 (210 aa).

This sequence belongs to the universal ribosomal protein uL3 family. Part of the 50S ribosomal subunit. Forms a cluster with proteins L14 and L19.

Its function is as follows. One of the primary rRNA binding proteins, it binds directly near the 3'-end of the 23S rRNA, where it nucleates assembly of the 50S subunit. This chain is Large ribosomal subunit protein uL3, found in Syntrophotalea carbinolica (strain DSM 2380 / NBRC 103641 / GraBd1) (Pelobacter carbinolicus).